Consider the following 269-residue polypeptide: Small ribosomal subunit protein uS2 (269 aa).

Residues 224 to 269 (ANQGREDSEDVYSETENDTEETDEELVSEEDLKEFVENSEEESDEE) form a disordered region. A compositionally biased stretch (acidic residues) spans 230-269 (DSEDVYSETENDTEETDEELVSEEDLKEFVENSEEESDEE).

Belongs to the universal ribosomal protein uS2 family.

The chain is Small ribosomal subunit protein uS2 from Finegoldia magna (strain ATCC 29328 / DSM 20472 / WAL 2508) (Peptostreptococcus magnus).